A 164-amino-acid polypeptide reads, in one-letter code: Anterior gradient protein 2 (164 aa).

A signal peptide spans 1–20 (METVLKTLFVLLVATSLTLA). 2 consecutive short sequence motifs (homodimer stabilization; interchain) follow at residues 34–43 (SRGWGDNLEW) and 49–56 (EGLYKAKT).

It belongs to the AGR family. As to quaternary structure, monomer and homodimer.

The protein resides in the secreted. Its subcellular location is the endoplasmic reticulum. The sequence is that of Anterior gradient protein 2 from Xenopus tropicalis (Western clawed frog).